The following is a 378-amino-acid chain: C-X-C chemokine receptor type 3-2 (378 aa).

Topologically, residues 1–47 (MDNSTTAAEVSAPTDYDYNSTSYDDDNPYAAPCSLTETWNFLGRFAP) are extracellular. 2 N-linked (GlcNAc...) asparagine glycosylation sites follow: Asn-3 and Asn-19. Residues 48–68 (VAYILVFILALVGNILVLCVI) traverse the membrane as a helical segment. Residues 69–86 (RRYRQSRHSPCSFSLTDT) lie on the Cytoplasmic side of the membrane. A helical membrane pass occupies residues 87–107 (FLLHLAVSDLLLAATLPFFAV). The Extracellular portion of the chain corresponds to 108–121 (EWISEWVFGKVMCK). Cys-120 and Cys-199 form a disulfide bridge. The helical transmembrane segment at 122–142 (ITGALFSLNVYCGVLFLACIS) threads the bilayer. The Cytoplasmic portion of the chain corresponds to 143–164 (FDRYLAIVHAINISWRRKTCHA). Residues 165 to 185 (QLACAFIWVICLGLSMVDMHF) form a helical membrane-spanning segment. Over 186-212 (RDLVEIPGMNRMVCQIVYSEQYSKQWQ) the chain is Extracellular. A helical membrane pass occupies residues 213–233 (IGMQLVSMVLGFILPLLVMLY). The Cytoplasmic portion of the chain corresponds to 234 to 253 (CYLHIFKALCHATRRQKRRS). A helical transmembrane segment spans residues 254–274 (LRLIISLVIVFVISWAPYNAL). Topologically, residues 275-304 (RMTDSLQMLGVIVKSCALNNVLDVGILVTE) are extracellular. The chain crosses the membrane as a helical span at residues 305–325 (SLGLAHCALNPLLYGLVGVKF). Over 326–378 (RRELAQMCKAALGPQGCLGLVGWANGRGSSTRRPTGSFSSVETENTSYFSVMA) the chain is Cytoplasmic.

This sequence belongs to the G-protein coupled receptor 1 family.

It is found in the cell membrane. Receptor for the C-X-C chemokines cxcl11.1 and cxcl11.6. Promotes macrophage chemotaxis to sites of bacterial infection. The chain is C-X-C chemokine receptor type 3-2 from Danio rerio (Zebrafish).